Consider the following 528-residue polypeptide: Sensory rhodopsin I transducer (528 aa).

A run of 2 helical transmembrane segments spans residues 11–31 and 35–55; these read GAKLGVGYIATATLLITVGVV and VASTVVAGIAGLLTLGSINAA. HAMP domains follow at residues 55–107 and 142–195; these read AETV…DRLS and TAYQ…ETIE. The Methyl-accepting transducer domain maps to 214–455; that stretch reads TSRRVQQEVD…ATADSIADVT (242 aa). Glutamate 259 is subject to Glutamate methyl ester (Glu).

This sequence belongs to the methyl-accepting chemotaxis (MCP) protein family. As to quaternary structure, interacts with Sop1.

It localises to the cell membrane. Transduces signals from the phototaxis receptor sensory rhodopsin I (Sop1). The chain is Sensory rhodopsin I transducer (htr1) from Haloarcula marismortui (strain ATCC 43049 / DSM 3752 / JCM 8966 / VKM B-1809) (Halobacterium marismortui).